The following is a 285-amino-acid chain: 2-dehydro-3-deoxyphosphooctonate aldolase (285 aa).

The protein belongs to the KdsA family.

Its subcellular location is the cytoplasm. The enzyme catalyses D-arabinose 5-phosphate + phosphoenolpyruvate + H2O = 3-deoxy-alpha-D-manno-2-octulosonate-8-phosphate + phosphate. It participates in carbohydrate biosynthesis; 3-deoxy-D-manno-octulosonate biosynthesis; 3-deoxy-D-manno-octulosonate from D-ribulose 5-phosphate: step 2/3. It functions in the pathway bacterial outer membrane biogenesis; lipopolysaccharide biosynthesis. The chain is 2-dehydro-3-deoxyphosphooctonate aldolase from Verminephrobacter eiseniae (strain EF01-2).